The primary structure comprises 165 residues: uncharacterized protein (165 aa).

The signal sequence occupies residues 1–25 (MKRVLFSVIVFTAVGFTFCQSKAHA).

This is an uncharacterized protein from Bacillus subtilis (strain 168).